The chain runs to 129 residues: Snaclec coagulation factor IX/factor X-binding protein subunit B3 (129 aa).

Residues 1–8 (LSLSGTAA) form the signal peptide. 3 disulfides stabilise this stretch: Cys10–Cys21, Cys38–Cys127, and Cys104–Cys119. A C-type lectin domain is found at 17-128 (YEGHCYKPFN…CRMMANFVCE (112 aa)).

The protein belongs to the snaclec family. As to quaternary structure, heterodimer of subunits A and B3; disulfide-linked. In terms of tissue distribution, expressed by the venom gland.

The protein localises to the secreted. Its function is as follows. Anticoagulant protein which binds to the gamma-carboxyglutamic acid-domain regions of factors IX (F9) and factor X (F10) in the presence of calcium with a 1 to 1 stoichiometry. The polypeptide is Snaclec coagulation factor IX/factor X-binding protein subunit B3 (Trimeresurus stejnegeri (Chinese green tree viper)).